Reading from the N-terminus, the 442-residue chain is Putative major teichoic acid biosynthesis protein C (442 aa).

Functionally, unknown. Might be involved in poly(glycerol phosphate) teichoic acid biosynthesis. The chain is Putative major teichoic acid biosynthesis protein C (tagC) from Bacillus subtilis (strain 168).